The chain runs to 591 residues: Reduced folate transporter (591 aa).

N-acetylmethionine is present on M1. The Cytoplasmic portion of the chain corresponds to M1 to V29. S5 is modified (phosphoserine). Residues C30–P50 traverse the membrane as a helical segment. Residues I48 and T49 each contribute to the folate site. Residues Y51 to V64 are Extracellular-facing. N-linked (GlcNAc...) asparagine glycosylation is present at N58. A helical membrane pass occupies residues T65–T87. Topologically, residues D88–R91 are cytoplasmic. A helical membrane pass occupies residues Y92–L112. At G113–V116 the chain is on the extracellular side. The helical transmembrane segment at A117 to Y139 threads the bilayer. The folate site is built by E123 and R133. The 2',3'-cGAMP site is built by R133, I134, S137, Y149, and R157. The Cytoplasmic segment spans residues I140–A153. A helical transmembrane segment spans residues G154–G178. A folate-binding site is contributed by V164. Over R179–S183 the chain is Extracellular. Residues T184–F202 traverse the membrane as a helical segment. Over L203–Q266 the chain is Cytoplasmic. S225 carries the phosphoserine modification. Residues L267–W292 form a helical membrane-spanning segment. Residues Y281, Y282, and Y286 each coordinate folate. Y282 serves as a coordination point for 2',3'-cGAMP. Topologically, residues N293–V304 are extracellular. Residues Y305 to V327 form a helical membrane-spanning segment. S321 serves as a coordination point for 2',3'-cGAMP. Topologically, residues K328–R333 are cytoplasmic. The chain crosses the membrane as a helical span at residues W334–A354. Residues H355 to S360 lie on the Extracellular side of the membrane. Residues S361–T384 traverse the membrane as a helical segment. The folate site is built by R373 and Q377. Residues Q377, P381, T384, K393, C396, and F400 each contribute to the 2',3'-cGAMP site. The Cytoplasmic portion of the chain corresponds to F385 to L398. Residues V399–R422 traverse the membrane as a helical segment. A required for substrate-binding region spans residues A407–S419. The Extracellular segment spans residues G423–K430. The chain crosses the membrane as a helical span at residues Q431–L455. The Cytoplasmic segment spans residues R456–Q591. Residues S474, S485, S499, and S503 each carry the phosphoserine modification.

Belongs to the reduced folate carrier (RFC) transporter (TC 2.A.48) family. Placenta, liver, and to a much smaller extent, in lung.

It localises to the cell membrane. The protein resides in the apical cell membrane. Its subcellular location is the basolateral cell membrane. The enzyme catalyses 5-amino-1-(5-phospho-beta-D-ribosyl)imidazole-4-carboxamide(in) + (6S)-5-methyl-5,6,7,8-tetrahydrofolate(out) = 5-amino-1-(5-phospho-beta-D-ribosyl)imidazole-4-carboxamide(out) + (6S)-5-methyl-5,6,7,8-tetrahydrofolate(in). The catalysed reaction is 2',3'-cGAMP(out) + 5-amino-1-(5-phospho-beta-D-ribosyl)imidazole-4-carboxamide(in) = 2',3'-cGAMP(in) + 5-amino-1-(5-phospho-beta-D-ribosyl)imidazole-4-carboxamide(out). It carries out the reaction 3',3'-cGAMP(out) + 5-amino-1-(5-phospho-beta-D-ribosyl)imidazole-4-carboxamide(in) = 3',3'-cGAMP(in) + 5-amino-1-(5-phospho-beta-D-ribosyl)imidazole-4-carboxamide(out). Antiporter that mediates the import of reduced folates or a subset of cyclic dinucleotides, driven by the export of organic anions. Acts as an importer of immunoreactive cyclic dinucleotides, such as cyclic GMP-AMP (2'-3'-cGAMP), an immune messenger produced in response to DNA virus in the cytosol, and its linkage isomer 3'-3'-cGAMP, thus playing a role in triggering larger immune responses. Mechanistically, acts as a secondary active transporter, which exports intracellular organic anions down their concentration gradients to facilitate the uptake of its substrates. Has high affinity for N5-methyltetrahydrofolate, the predominant circulating form of folate. Also mediates the import of antifolate drug methotrexate. 5-amino-4-imidazolecarboxamide riboside (AICAR), when phosphorylated to AICAR monophosphate, can serve as an organic anion for antiporter activity. The sequence is that of Reduced folate transporter from Homo sapiens (Human).